A 671-amino-acid polypeptide reads, in one-letter code: E3 ubiquitin-protein ligase pub2 (671 aa).

The 112-residue stretch at 1 to 112 (MENIRFEVQL…KDDYKTRITL (112 aa)) folds into the C2 domain. One can recognise a WW domain in the interval 242 to 275 (GPLPAGWEMRLSEDYHVYFVDHSTKTTTWSDPRD). The HECT domain occupies 338–671 (SVSDMKKKLL…IQETAGFGTE (334 aa)). The Glycyl thioester intermediate role is filled by C639.

As to quaternary structure, interacts with the E2 ubiquitin-conjugating enzyme ubc4.

The protein localises to the membrane. Its subcellular location is the cytoplasm. It carries out the reaction S-ubiquitinyl-[E2 ubiquitin-conjugating enzyme]-L-cysteine + [acceptor protein]-L-lysine = [E2 ubiquitin-conjugating enzyme]-L-cysteine + N(6)-ubiquitinyl-[acceptor protein]-L-lysine.. The protein operates within protein modification; protein ubiquitination. In terms of biological role, E3 ubiquitin-protein ligase which accepts ubiquitin from an E2 ubiquitin-conjugating enzyme in the form of a thioester and then directly transfers the ubiquitin to targeted substrates. The sequence is that of E3 ubiquitin-protein ligase pub2 (pub2) from Schizosaccharomyces pombe (strain 972 / ATCC 24843) (Fission yeast).